We begin with the raw amino-acid sequence, 361 residues long: Mannose-1-phosphate guanyltransferase 2 (361 aa).

Belongs to the transferase hexapeptide repeat family.

The protein localises to the cytoplasm. It catalyses the reaction alpha-D-mannose 1-phosphate + GTP + H(+) = GDP-alpha-D-mannose + diphosphate. It participates in nucleotide-sugar biosynthesis; GDP-alpha-D-mannose biosynthesis; GDP-alpha-D-mannose from alpha-D-mannose 1-phosphate (GTP route): step 1/1. In terms of biological role, involved in cell wall synthesis where it is required for glycosylation. Involved in cell cycle progression through cell-size checkpoint. This chain is Mannose-1-phosphate guanyltransferase 2 (MPG1), found in Candida glabrata (strain ATCC 2001 / BCRC 20586 / JCM 3761 / NBRC 0622 / NRRL Y-65 / CBS 138) (Yeast).